A 328-amino-acid polypeptide reads, in one-letter code: Malate dehydrogenase (328 aa).

12–18 (GAAGQIG) is an NAD(+) binding site. Residues R95 and R101 each contribute to the substrate site. NAD(+) is bound by residues N108, Q115, and 132–134 (VGN). The substrate site is built by N134 and R165. The Proton acceptor role is filled by H190.

Belongs to the LDH/MDH superfamily. MDH type 2 family.

It carries out the reaction (S)-malate + NAD(+) = oxaloacetate + NADH + H(+). In terms of biological role, catalyzes the reversible oxidation of malate to oxaloacetate. This chain is Malate dehydrogenase, found in Delftia acidovorans (strain DSM 14801 / SPH-1).